A 255-amino-acid chain; its full sequence is 4-diphosphocytidyl-2-C-methyl-D-erythritol kinase (255 aa).

Lys6 is an active-site residue. An ATP-binding site is contributed by 95–105 (PVCAGLGGGSS). Asp137 is a catalytic residue.

Belongs to the GHMP kinase family. IspE subfamily.

It carries out the reaction 4-CDP-2-C-methyl-D-erythritol + ATP = 4-CDP-2-C-methyl-D-erythritol 2-phosphate + ADP + H(+). Its pathway is isoprenoid biosynthesis; isopentenyl diphosphate biosynthesis via DXP pathway; isopentenyl diphosphate from 1-deoxy-D-xylulose 5-phosphate: step 3/6. In terms of biological role, catalyzes the phosphorylation of the position 2 hydroxy group of 4-diphosphocytidyl-2C-methyl-D-erythritol. The polypeptide is 4-diphosphocytidyl-2-C-methyl-D-erythritol kinase (Campylobacter jejuni subsp. jejuni serotype O:2 (strain ATCC 700819 / NCTC 11168)).